A 170-amino-acid chain; its full sequence is Photosystem II extrinsic protein V (170 aa).

Residues 1–33 (MASLFASLGRSLIKLLIVLPVIIGLSISSPAMA) form the signal peptide. Heme c is bound by residues C70, C73, H74, and H125.

The protein belongs to the cytochrome c family. PsbV subfamily. PSII is composed of 1 copy each of membrane proteins PsbA, PsbB, PsbC, PsbD, PsbE, PsbF, PsbH, PsbI, PsbJ, PsbK, PsbL, PsbM, PsbT, PsbX, PsbY, Psb30/Ycf12, peripheral proteins PsbO, CyanoQ (PsbQ), PsbU, PsbV and a large number of cofactors. It forms dimeric complexes. Requires heme c as cofactor.

Its subcellular location is the cellular thylakoid membrane. Functionally, one of the extrinsic, lumenal subunits of photosystem II (PSII). PSII is a light-driven water plastoquinone oxidoreductase, using light energy to abstract electrons from H(2)O, generating a proton gradient subsequently used for ATP formation. The extrinsic proteins stabilize the structure of photosystem II oxygen-evolving complex (OEC), the ion environment of oxygen evolution and protect the OEC against heat-induced inactivation. Low-potential cytochrome c that plays a role in the OEC of PSII. The sequence is that of Photosystem II extrinsic protein V from Prochlorococcus marinus (strain MIT 9303).